Here is a 640-residue protein sequence, read N- to C-terminus: Translation factor GUF1, mitochondrial (640 aa).

A mitochondrion-targeting transit peptide spans 1-26 (MRRLRSLYLQSSICFRRFNHYSAKDT). In terms of domain architecture, tr-type G spans 39 to 223 (ENYRNFSIVA…AIIDRIPPPT (185 aa)). GTP contacts are provided by residues 48–55 (AHVDHGKS), 115–119 (DTPGH), and 169–172 (NKID).

It belongs to the TRAFAC class translation factor GTPase superfamily. Classic translation factor GTPase family. LepA subfamily.

The protein resides in the mitochondrion inner membrane. It catalyses the reaction GTP + H2O = GDP + phosphate + H(+). Functionally, promotes mitochondrial protein synthesis. May act as a fidelity factor of the translation reaction, by catalyzing a one-codon backward translocation of tRNAs on improperly translocated ribosomes. Binds to mitochondrial ribosomes in a GTP-dependent manner. The polypeptide is Translation factor GUF1, mitochondrial (Lachancea thermotolerans (strain ATCC 56472 / CBS 6340 / NRRL Y-8284) (Yeast)).